The following is a 408-amino-acid chain: DNA polymerase processivity factor (408 aa).

A Nuclear localization signal motif is present at residues 344-353; sequence KKRRNLLTKR.

It belongs to the herpesviridae DNA polymerase processivity factor family. Interacts with the DNA polymerase catalytic subunit. Interacts with the origin-binding protein.

The protein localises to the host nucleus. Plays an essential role in viral DNA replication by acting as the polymerase accessory subunit. Associates with the viral polymerase to increase its processivity and forms high-affinity direct interactions with DNA. Facilitates the origin-binding protein loading onto DNA thus increasing its ability to assemble into a functional complex capable of unwinding duplex DNA. The protein is DNA polymerase processivity factor of Varicella-zoster virus (strain Dumas) (HHV-3).